Reading from the N-terminus, the 693-residue chain is Cyclin-dependent kinase G-1 (693 aa).

Residues 1-10 (MAAGSHGGYR) are compositionally biased toward gly residues. Disordered stretches follow at residues 1-148 (MAAG…ARDP) and 236-308 (KKKK…DDYP). Positions 13–24 (EVAREREHDVGV) are enriched in basic and acidic residues. A compositionally biased stretch (basic residues) spans 26 to 39 (RRSKEHYHHRHPSR). Composition is skewed to basic and acidic residues over residues 40-54 (HRDSERRRDGGRSGG), 75-87 (RPSEGRTEDREPG), and 97-122 (RSGERPMKTREPRENGVTRVSKEEAK). Residues 268-284 (SVRSSSRSSDSGVLQGS) show a composition bias toward low complexity. Residues 287–304 (RDLEVEKGDNIDVEKAAD) are compositionally biased toward basic and acidic residues. The Protein kinase domain occupies 349–640 (FERLNTINEG…AEDALNHEWF (292 aa)). ATP-binding positions include 355–363 (INEGTYGVV) and K378. T359 bears the Phosphothreonine mark. Y360 is subject to Phosphotyrosine. D473 functions as the Proton acceptor in the catalytic mechanism. Position 500 is a phosphoserine (S500). T506 is modified (phosphothreonine). The disordered stretch occupies residues 664–693 (RFKKHMKSPDPLEEQWMKEQGNNGDRGLFG).

The protein belongs to the protein kinase superfamily. CMGC Ser/Thr protein kinase family. CDC2/CDKX subfamily.

The enzyme catalyses L-seryl-[protein] + ATP = O-phospho-L-seryl-[protein] + ADP + H(+). It carries out the reaction L-threonyl-[protein] + ATP = O-phospho-L-threonyl-[protein] + ADP + H(+). It catalyses the reaction [DNA-directed RNA polymerase] + ATP = phospho-[DNA-directed RNA polymerase] + ADP + H(+). This Oryza sativa subsp. indica (Rice) protein is Cyclin-dependent kinase G-1 (CDKG-1).